Reading from the N-terminus, the 498-residue chain is Tyrosine 3-monooxygenase (498 aa).

Residues 1–10 are compositionally biased toward polar residues; the sequence is MPTPSASSPQ. A disordered region spans residues 1–33; it reads MPTPSASSPQPKGFRRAVSEQDTKQAEAVTSPR. Ser-19 and Ser-31 each carry phosphoserine. Position 40 is a phosphoserine; by CaMK2 and PKA (Ser-40). 3 residues coordinate Fe cation: His-331, His-336, and Glu-376. At Ser-472 the chain carries Phosphoserine.

It belongs to the biopterin-dependent aromatic amino acid hydroxylase family. In terms of assembly, homotetramer. Interacts (when phosphorylated at Ser-19) with YWHAG; one YWHAG dimer bounds to one TH tetramer and this interaction may influence the phosphorylation and dephosphorylation of other sites. Interacts with NT5DC2; the interaction results in reduced phosphorylation and decreased catalytic activity of TH. Fe(2+) serves as cofactor. Post-translationally, phosphorylated on Ser-19, Ser-31 and Ser-40 by several protein kinases with different site specificities. Phosphorylation at Ser-31 and Ser-40 leads to an increase of TH activity. Phosphorylation at Ser-40 activates the enzyme and also counteracts the feedback inhibition of TH by catecholamines. Phosphorylation of Ser-19 and Ser-31 triggers the proteasomal degradation of TH through the ubiquitin-proteasome pathway. Phosphorylation at Ser-31 facilitates transport of TH from the soma to the nerve terminals via the microtubule network. Phosphorylation at Ser-19 induces the high-affinity binding to the 14-3-3 protein YWHAG; this interaction may influence the phosphorylation and dephosphorylation of other sites. Ser-19 increases the phosphorylation at Ser-40 in a hierarchical manner, leading to increased activity. Expressed in the adrenal gland. Expressed in the retina. Expressed in the in the striatum (at protein level).

It is found in the cytoplasm. It localises to the perinuclear region. Its subcellular location is the nucleus. The protein localises to the cell projection. The protein resides in the axon. It is found in the cytoplasmic vesicle. It localises to the secretory vesicle. Its subcellular location is the synaptic vesicle. It carries out the reaction (6R)-L-erythro-5,6,7,8-tetrahydrobiopterin + L-tyrosine + O2 = (4aS,6R)-4a-hydroxy-L-erythro-5,6,7,8-tetrahydrobiopterin + L-dopa. It functions in the pathway catecholamine biosynthesis; dopamine biosynthesis; dopamine from L-tyrosine: step 1/2. Inhibited in feedback fashion by the catecholamine neurotransmitters, especially by dopamine in competition with tetrahydrobiopterin. Phosphorylation of several Ser/Thr residues in the N-terminus regulates the catalytic activity. Ser-31 and Ser-40 are readily phosphorylated to activate the catalytic activity. A Cysteine modification induced by N-ethylmaleimide (NEM), inhibits tyrosine 3-monooxygenase activity through the modification of the Cys-177. Its function is as follows. Catalyzes the conversion of L-tyrosine to L-dihydroxyphenylalanine (L-Dopa), the rate-limiting step in the biosynthesis of catecholamines, dopamine, noradrenaline, and adrenaline. Uses tetrahydrobiopterin and molecular oxygen to convert tyrosine to L-Dopa. In addition to tyrosine, is able to catalyze the hydroxylation of phenylalanine and tryptophan with lower specificity. Positively regulates the regression of retinal hyaloid vessels during postnatal development. The sequence is that of Tyrosine 3-monooxygenase (Th) from Mus musculus (Mouse).